Consider the following 125-residue polypeptide: Small ribosomal subunit protein bS16 (125 aa).

A disordered region spans residues 87-125; the sequence is EGKKKQALARQSASKKAVKEKTEESKGSEVDSETSTSAD. Residues 103–115 are compositionally biased toward basic and acidic residues; sequence AVKEKTEESKGSE.

This sequence belongs to the bacterial ribosomal protein bS16 family.

The sequence is that of Small ribosomal subunit protein bS16 from Prochlorococcus marinus (strain MIT 9211).